Here is a 249-residue protein sequence, read N- to C-terminus: 2,3-bisphosphoglycerate-dependent phosphoglycerate mutase (249 aa).

Residues 9–16 (RHGQSQWN), 22–23 (TG), Arg-61, 88–91 (ERHY), Lys-99, 115–116 (RR), and 184–185 (GN) contribute to the substrate site. The active-site Tele-phosphohistidine intermediate is the His-10. Catalysis depends on Glu-88, which acts as the Proton donor/acceptor.

The protein belongs to the phosphoglycerate mutase family. BPG-dependent PGAM subfamily. Homodimer.

The catalysed reaction is (2R)-2-phosphoglycerate = (2R)-3-phosphoglycerate. It functions in the pathway carbohydrate degradation; glycolysis; pyruvate from D-glyceraldehyde 3-phosphate: step 3/5. Its function is as follows. Catalyzes the interconversion of 2-phosphoglycerate and 3-phosphoglycerate. This chain is 2,3-bisphosphoglycerate-dependent phosphoglycerate mutase, found in Xanthomonas oryzae pv. oryzae (strain PXO99A).